The chain runs to 336 residues: tRNA-cytidine(32) 2-sulfurtransferase (336 aa).

Low complexity predominate over residues 11 to 23 (TAAAPAGTGEATP). The disordered stretch occupies residues 11–31 (TAAAPAGTGEATPVHARARSP). Residues 75–80 (SGGKDS) carry the PP-loop motif motif. [4Fe-4S] cluster-binding residues include cysteine 150, cysteine 153, and cysteine 241.

It belongs to the TtcA family. In terms of assembly, homodimer. Requires Mg(2+) as cofactor. The cofactor is [4Fe-4S] cluster.

The protein localises to the cytoplasm. The catalysed reaction is cytidine(32) in tRNA + S-sulfanyl-L-cysteinyl-[cysteine desulfurase] + AH2 + ATP = 2-thiocytidine(32) in tRNA + L-cysteinyl-[cysteine desulfurase] + A + AMP + diphosphate + H(+). It functions in the pathway tRNA modification. Catalyzes the ATP-dependent 2-thiolation of cytidine in position 32 of tRNA, to form 2-thiocytidine (s(2)C32). The sulfur atoms are provided by the cysteine/cysteine desulfurase (IscS) system. The sequence is that of tRNA-cytidine(32) 2-sulfurtransferase from Paraburkholderia xenovorans (strain LB400).